A 400-amino-acid chain; its full sequence is Na(+)/H(+) antiporter NhaA (400 aa).

A run of 12 helical transmembrane segments spans residues 26–46 (AGGI…NSPL), 71–91 (LIHW…GMEV), 107–127 (IFPA…YWFI), 137–157 (GWAI…ALLS), 166–186 (IFLL…IALF), 189–209 (HGLS…LILL), 212–232 (FKVS…ASVL), 233–253 (KSGV…PLKG), 273–293 (FVIL…GIDV), 299–319 (PLLL…IFGF), 340–360 (IFAV…LASL), and 373–393 (LSRL…YLFL).

This sequence belongs to the NhaA Na(+)/H(+) (TC 2.A.33) antiporter family.

Its subcellular location is the cell inner membrane. It catalyses the reaction Na(+)(in) + 2 H(+)(out) = Na(+)(out) + 2 H(+)(in). Na(+)/H(+) antiporter that extrudes sodium in exchange for external protons. The polypeptide is Na(+)/H(+) antiporter NhaA (Haemophilus influenzae (strain 86-028NP)).